A 432-amino-acid polypeptide reads, in one-letter code: Adenylosuccinate synthetase (432 aa).

GTP is bound by residues 13-19 and 41-43; these read GDEGKGK and GHT. Asp14 serves as the catalytic Proton acceptor. The Mg(2+) site is built by Asp14 and Gly41. Residues 14–17, 39–42, Thr130, Arg144, Gln225, Thr240, and Arg304 each bind IMP; these read DEGK and NAGH. The Proton donor role is filled by His42. 300–306 serves as a coordination point for substrate; that stretch reads ATTGRRR. GTP contacts are provided by residues Arg306, 332 to 334, and 414 to 416; these read KLD and STG.

Belongs to the adenylosuccinate synthetase family. Homodimer. The cofactor is Mg(2+).

It is found in the cytoplasm. It catalyses the reaction IMP + L-aspartate + GTP = N(6)-(1,2-dicarboxyethyl)-AMP + GDP + phosphate + 2 H(+). Its pathway is purine metabolism; AMP biosynthesis via de novo pathway; AMP from IMP: step 1/2. Plays an important role in the de novo pathway of purine nucleotide biosynthesis. Catalyzes the first committed step in the biosynthesis of AMP from IMP. This is Adenylosuccinate synthetase from Methylococcus capsulatus (strain ATCC 33009 / NCIMB 11132 / Bath).